A 1008-amino-acid chain; its full sequence is Phytosulfokine receptor 1 (1008 aa).

An N-terminal signal peptide occupies residues 1-25 (MRVHRFCVIVIFLTELLCFFYSSES). Residues Asn55, Asn64, and Asn73 are each glycosylated (N-linked (GlcNAc...) asparagine). 12 LRR repeats span residues 75–98 (TGRVIRLELGNKKLSGKLSESLGK), 99–123 (LDEIRVLNLSRNFIKDSIPLSIFNL), 124–148 (KNLQTLDLSSNDLSGGIPTSINLPA), 150–170 (QSFDLSSNKFNGSLPSHICHN), 172–194 (TQIRVVKLAVNYFAGNFTSGFGK), 195–219 (CVLLEHLCLGMNDLTGNIPEDLFHL), 221–243 (RLNLLGIQENRLSGSLSREIRNL), 244–266 (SSLVRLDVSWNLFSGEIPDVFDE), 291–315 (SPSLNLLNLRNNSLSGRLMLNCTAM), 316–339 (IALNSLDLGTNRFNGRLPENLPDC), 341–362 (RLKNVNLARNTFHGQVPESFKN), and 363–387 (FESLSYFSLSNSSLANISSALGILQ). A glycan (N-linked (GlcNAc...) asparagine) is linked at Asn106. N-linked (GlcNAc...) asparagine glycans are attached at residues Asn160, Asn170, and Asn187. Asn242 carries an N-linked (GlcNAc...) asparagine glycan. Arg300 provides a ligand contact to phytosulfokine. 2 N-linked (GlcNAc...) asparagine glycosylation sites follow: Asn301 and Asn311. Phytosulfokine-binding residues include Asn346, Ser370, and Ser372. N-linked (GlcNAc...) asparagine glycosylation is found at Asn373, Asn378, and Asn391. LRR repeat units follow at residues 392–414 (LTTLVLTLNFHGEALPDDSSLHF), 415–438 (EKLKVLVVANCRLTGSMPRWLSSS), 439–464 (NELQLLDLSWNRLTGAIPSWIGDFKA), and 466–486 (FYLDLSNNSFTGEIPKSLTKL). Thr398, Asn424, and Asp445 together coordinate phytosulfokine. N-linked (GlcNAc...) asparagine glycans are attached at residues Asn472 and Asn493. Lys508 is a binding site for phytosulfokine. 2 N-linked (GlcNAc...) asparagine glycosylation sites follow: Asn510 and Asn534. LRR repeat units lie at residues 521-545 (IFGFPPTIELGHNNLSGPIWEEFGN), 546-570 (LKKLHVFDLKWNALSGSIPSSLSGM), 571-594 (TSLEALDLSNNRLSGSIPVSLQQL), and 596-619 (FLSKFSVAYNNLSGVIPSGGQFQT). N-linked (GlcNAc...) asparagine glycosylation is found at Asn606 and Asn622. Residues 660 to 680 (MAIGIAFGSVFLLTLLSLIVL) form a helical membrane-spanning segment. Thr731 carries the phosphothreonine modification. The Protein kinase domain occupies 734–1005 (FDQANIIGCG…PTTQQLVSWL (272 aa)). Residues 740–748 (IGCGGFGMV) and Lys762 each bind ATP. Tyr807 and Tyr847 each carry phosphotyrosine. Residue Asp860 is the Proton acceptor of the active site. The residue at position 902 (Tyr902) is a Phosphotyrosine.

This sequence belongs to the protein kinase superfamily. Ser/Thr protein kinase family. As to quaternary structure, homo- and heterodimers with PSY1R. Heterodimers with the somatic embryogenesis receptor-like kinases (SERKs). PSK is not directly involved in PSKR-SERK interaction but stabilizes PSKR island domain for recruitment of a SERK. Part of a functional complex containing PSKR1, BAK1, CNGC17, and AHA. Interacts with AHA1, AHA2, and BAK1, but not with CNGC17 or BRI1. It depends on Mg(2+) as a cofactor. The cofactor is Mn(2+). Weakly expressed in roots, leaves, stems and flowers. Expressed in the primary and lateral roots, including root primordia and root tips, but not in the hypocotyl.

It is found in the cell membrane. The catalysed reaction is L-seryl-[protein] + ATP = O-phospho-L-seryl-[protein] + ADP + H(+). It catalyses the reaction L-threonyl-[protein] + ATP = O-phospho-L-threonyl-[protein] + ADP + H(+). The enzyme catalyses GTP = 3',5'-cyclic GMP + diphosphate. With respect to regulation, cGMP suppresses kinase activity. In terms of biological role, phytosulfokine receptor with both a serine/threonine-protein kinase activity and a guanylate cyclase activity. Regulates, in response to phytosulfokine binding, a signaling cascade involved in plant cell differentiation, organogenesis, somatic embryogenesis, cellular proliferation and plant growth. Involved in plant immunity, with antagonistic effects on bacterial and fungal resistances. Not involved in PSY perception. CNGC17 and AHAs form a functional cation-translocating unit that is activated by PSKR1/BAK1 and possibly other BAK1/RLK complexes. In Arabidopsis thaliana (Mouse-ear cress), this protein is Phytosulfokine receptor 1.